The following is an 858-amino-acid chain: Myosin-K heavy chain (858 aa).

In terms of domain architecture, Myosin motor spans 7–820 (SGVDDLVLVS…TIFVMEDLLM (814 aa)). 100–107 (GESGAGKT) serves as a coordination point for ATP. Residues 121 to 265 (SPNNSSGGGI…GGGYGGSSKT (145 aa)) are disordered. Composition is skewed to gly residues over residues 126 to 139 (SGGG…GNGG) and 157 to 182 (RGMG…SRGG). Over residues 183 to 228 (GPPPTRGRGGPPPPIPQNRGAPPPVSNGGAPPPVARGPVAPPPTRG) the composition is skewed to pro residues. A compositionally biased stretch (gly residues) spans 233–245 (RGGGPANRGGRGG). An actin-binding region spans residues 712-722 (PHYIRCIKPND). Residues 821-858 (QKIDPIGYKNRVQAYKENEKLAQMKQGKHSMKQKCLIQ) are tail.

This sequence belongs to the TRAFAC class myosin-kinesin ATPase superfamily. Myosin family.

The protein resides in the cytoplasm. Functionally, myosins are actin-based motor molecules with ATPase activity. Involved in phagocytosis and motility, and in the maintenance and dynamics of cell cortex. The polypeptide is Myosin-K heavy chain (myoK) (Dictyostelium discoideum (Social amoeba)).